Here is a 479-residue protein sequence, read N- to C-terminus: Carbohydrate sulfotransferase 3 (479 aa).

Topologically, residues 1–20 are cytoplasmic; the sequence is MEKGLTLPQDCRDFVHSLKM. A helical; Signal-anchor for type II membrane protein transmembrane segment spans residues 21 to 38; that stretch reads RSKYALFLVFVVIVFVFI. The Lumenal segment spans residues 39–479; sequence EKENKIISRV…LEERGTFWVT (441 aa). N-linked (GlcNAc...) asparagine glycosylation is found at Asn-63, Asn-74, and Asn-96. Residues 108–128 form a disordered region; the sequence is EAAGEEEEEQRKEEEPPRPAV. Residue 141–147 coordinates 3'-phosphoadenylyl sulfate; sequence TRTGSSF. Residue Asn-256 is glycosylated (N-linked (GlcNAc...) asparagine). Position 301-309 (301-309) interacts with 3'-phosphoadenylyl sulfate; sequence RDPRAVLAS. N-linked (GlcNAc...) asparagine glycosylation is found at Asn-420 and Asn-464.

Belongs to the sulfotransferase 1 family. Gal/GlcNAc/GalNAc subfamily. Post-translationally, N-glycosylated. Widely expressed in adult tissues. Expressed in heart, placenta, skeletal muscle and pancreas. Also expressed in various immune tissues such as spleen, lymph node, thymus and appendix.

The protein resides in the golgi apparatus membrane. The catalysed reaction is chondroitin beta-D-glucuronate + n 3'-phosphoadenylyl sulfate = chondroitin 6'-sulfate + n adenosine 3',5'-bisphosphate + n H(+). It carries out the reaction 3'-phosphoadenylyl sulfate + keratan = adenosine 3',5'-bisphosphate + keratan 6'-sulfate.. Its function is as follows. Sulfotransferase that utilizes 3'-phospho-5'-adenylyl sulfate (PAPS) as sulfonate donor to catalyze the transfer of sulfate to position 6 of the N-acetylgalactosamine (GalNAc) residue of chondroitin. Chondroitin sulfate constitutes the predominant proteoglycan present in cartilage and is distributed on the surfaces of many cells and extracellular matrices. Catalyzes with a lower efficiency the sulfation of Gal residues of keratan sulfate, another glycosaminoglycan. Can also catalyze the sulfation of the Gal residues in sialyl N-acetyllactosamine (sialyl LacNAc) oligosaccharides. May play a role in the maintenance of naive T-lymphocytes in the spleen. The polypeptide is Carbohydrate sulfotransferase 3 (CHST3) (Homo sapiens (Human)).